Here is an 86-residue protein sequence, read N- to C-terminus: Small ribosomal subunit protein bS16 (86 aa).

It belongs to the bacterial ribosomal protein bS16 family.

This Nostoc punctiforme (strain ATCC 29133 / PCC 73102) protein is Small ribosomal subunit protein bS16.